A 294-amino-acid chain; its full sequence is MKMMVVVVVMMLSWLILKPPSTWAINTITFDVGNATINKYATFMKSIHNQAKDPTLKCYGIPMLPNTNLTPKYLLVTLQDSSLKTITLMLKRNNLYVMGYADTYNGKCRYHIFKDISNTTERNDVMTTLCPNPSSRVGKNINYDSSYPALEKKVGRPRSQVQLGIQILNSGIGKIYGVDSFTEKTEAEFLLVAIQMVSEAARFKYIENQVKTNFNRAFYPNAKVLNLEESWGKISTAIHNAKNGALTSPLELKNANGSKWIVLRVDDIEPDVGLLKYVNGTCQATYQSAMFPHL.

The first 24 residues, 1–24 (MKMMVVVVVMMLSWLILKPPSTWA), serve as a signal peptide directing secretion. Intrachain disulfides connect Cys-58-Cys-282 and Cys-108-Cys-130. The active site involves Glu-199. A propeptide spanning residues 286–294 (YQSAMFPHL) is cleaved from the precursor.

It belongs to the ribosome-inactivating protein family. Type 1 RIP subfamily. As to quaternary structure, monomer.

It localises to the secreted. It is found in the cell wall. The catalysed reaction is Endohydrolysis of the N-glycosidic bond at one specific adenosine on the 28S rRNA.. Its function is as follows. Inhibits viral infection of plants, and protein synthesis in vitro. Has also been shown to inhibit the replication of mammalian viruses. The protein may provide a means of cellular suicide upon invasion by a virus. The polypeptide is Antiviral protein alpha (Phytolacca americana (American pokeweed)).